Consider the following 232-residue polypeptide: dTTP/UTP pyrophosphatase (232 aa).

The Proton acceptor role is filled by Asp103.

It belongs to the Maf family. YhdE subfamily. The cofactor is a divalent metal cation.

It localises to the cytoplasm. The catalysed reaction is dTTP + H2O = dTMP + diphosphate + H(+). It carries out the reaction UTP + H2O = UMP + diphosphate + H(+). It catalyses the reaction 5-methyl-UTP + H2O = 5-methyl-UMP + diphosphate + H(+). The enzyme catalyses psi-UTP + H2O = psi-UMP + diphosphate + H(+). Functionally, nucleoside triphosphate pyrophosphatase that hydrolyzes dTTP and UTP. Can also hydrolyze the modified nucleotides 5-methyl-UTP (m(5)UTP) and pseudo-UTP. Has weak activity with CTP. May have a dual role in cell division arrest and in preventing the incorporation of modified nucleotides into cellular nucleic acids. The chain is dTTP/UTP pyrophosphatase from Saccharomyces cerevisiae (strain ATCC 204508 / S288c) (Baker's yeast).